Here is a 111-residue protein sequence, read N- to C-terminus: Nucleoid-associated protein glr3498 (111 aa).

It belongs to the YbaB/EbfC family. In terms of assembly, homodimer.

It is found in the cytoplasm. It localises to the nucleoid. In terms of biological role, binds to DNA and alters its conformation. May be involved in regulation of gene expression, nucleoid organization and DNA protection. The protein is Nucleoid-associated protein glr3498 of Gloeobacter violaceus (strain ATCC 29082 / PCC 7421).